A 1034-amino-acid polypeptide reads, in one-letter code: Potassium-transporting ATPase alpha chain 1 (1034 aa).

Topologically, residues 1-97 (MGKAENYELY…NALRPPRGTP (97 aa)) are cytoplasmic. Tyrosine 7 and tyrosine 10 each carry phosphotyrosine. A disordered region spans residues 14 to 41 (LGSGPGGDMTAKMSKKKAGGGGGKKKEK). Over residues 26 to 39 (MSKKKAGGGGGKKK) the composition is skewed to basic residues. Serine 27 carries the phosphoserine modification. The helical transmembrane segment at 98-118 (EYVKFARQLAGGLQCLMWVAA) threads the bilayer. The Lumenal segment spans residues 119 to 141 (AICLIAFAIQASEGDLTTDDNLY). A helical transmembrane segment spans residues 142 to 162 (LAVALIAVVVVTGCFGYYQEF). The Cytoplasmic segment spans residues 163-298 (KSTNIIASFK…NEKTPIAIEI (136 aa)). A helical transmembrane segment spans residues 299–318 (EHFVDIIAGLAILFGATFFV). Over 319 to 330 (VAMCIGYTFLRA) the chain is Lumenal. The helical transmembrane segment at 331-348 (MVFFMAIVVAYVPEGLLA) threads the bilayer. 4 residues coordinate K(+): valine 339, alanine 340, valine 342, and glutamate 344. The Cytoplasmic segment spans residues 349 to 782 (TVTVCLSLTA…EQGRLIFDNL (434 aa)). Aspartate 386 functions as the 4-aspartylphosphate intermediate in the catalytic mechanism. Mg(2+) is bound by residues aspartate 386 and threonine 388. Phosphoserine occurs at positions 462 and 600. Mg(2+)-binding residues include aspartate 727 and aspartate 731. A helical transmembrane segment spans residues 783–802 (KKSIAYTLTKNIPELTPYLI). Residue glutamate 796 coordinates K(+). Topologically, residues 803 to 812 (YITVSVPLPL) are lumenal. Residues 813-833 (GCITILFIELCTDIFPSVSLA) traverse the membrane as a helical segment. Glutamate 821 lines the K(+) pocket. The Cytoplasmic portion of the chain corresponds to 834 to 853 (YEKAESDIMHLRPRNPKRDR). Serine 839 carries the phosphoserine modification. The helical transmembrane segment at 854–876 (LVNEPLAAYSYFQIGAIQSFAGF) threads the bilayer. Residues 877-928 (ADYFTAMAQEGWFPLLCVGLRPQWEDHHLQDLQDSYGQEWTFGQRLYQQYTC) are Lumenal-facing. The chain crosses the membrane as a helical span at residues 929-948 (YTVFFISIEMCQIADVLIRK). At 949–962 (TRRLSVFQQGFFRN) the chain is on the cytoplasmic side. Phosphoserine; by PKA is present on serine 953. Residues 963-981 (KILVIAIVFQVCIGCFLCY) form a helical membrane-spanning segment. Residues 982–996 (CPGMPNIFNFMPIRF) are Lumenal-facing. The helical transmembrane segment at 997 to 1017 (QWWLVPMPFGLLIFVYDEIRK) threads the bilayer. The Cytoplasmic segment spans residues 1018–1034 (LGVRCCPGSWWDQELYY).

Belongs to the cation transport ATPase (P-type) (TC 3.A.3) family. Type IIC subfamily. As to quaternary structure, the gastric H(+)/K(+) ATPase pump is composed of the catalytic alpha subunit ATP4A and the regulatory beta subunit ATP4B. Interacts (via the P-domain) with ATP4B (via N-terminus); this interaction stabilizes the lumenal-open E2 conformation state and prevents the reverse reaction of the transport cycle. In terms of tissue distribution, expressed in parietal cells (at protein level).

It is found in the apical cell membrane. It carries out the reaction K(+)(out) + ATP + H2O + H(+)(in) = K(+)(in) + ADP + phosphate + 2 H(+)(out). Its function is as follows. The catalytic subunit of the gastric H(+)/K(+) ATPase pump which transports H(+) ions in exchange for K(+) ions across the apical membrane of parietal cells. Uses ATP as an energy source to pump H(+) ions to the gastric lumen while transporting K(+) ion from the lumen into the cell. Remarkably generates a million-fold proton gradient across the gastric parietal cell membrane, acidifying the gastric juice down to pH 1. Within a transport cycle, the transfer of a H(+) ion across the membrane is coupled to ATP hydrolysis and is associated with a transient phosphorylation that shifts the pump conformation from inward-facing (E1) to outward-facing state (E2). The release of the H(+) ion in the stomach lumen is followed by binding of K(+) ion converting the pump conformation back to the E1 state. This Mus musculus (Mouse) protein is Potassium-transporting ATPase alpha chain 1.